Reading from the N-terminus, the 127-residue chain is Small ribosomal subunit protein uS11 (127 aa).

Belongs to the universal ribosomal protein uS11 family. In terms of assembly, part of the 30S ribosomal subunit.

Functionally, located on the platform of the 30S subunit. This chain is Small ribosomal subunit protein uS11, found in Picrophilus torridus (strain ATCC 700027 / DSM 9790 / JCM 10055 / NBRC 100828 / KAW 2/3).